Consider the following 62-residue polypeptide: UPF0291 protein CLJ_B2839 (62 aa).

This sequence belongs to the UPF0291 family.

The protein localises to the cytoplasm. This chain is UPF0291 protein CLJ_B2839, found in Clostridium botulinum (strain 657 / Type Ba4).